The chain runs to 288 residues: Probable aquaporin PIP2-2 (288 aa).

The interval 1 to 21 is disordered; the sequence is MAKDIEASAPEGGEFSAKDYT. The next 2 helical transmembrane spans lie at 42 to 62 and 81 to 101; these read AVIAEFIATLLFLYITVATVI and GVGILGIAWAFGGMIFILVYC. Positions 111–113 match the NPA 1 motif; that stretch reads NPA. Helical transmembrane passes span 130–150, 172–192, and 204–224; these read VLYIIAQCLGAICGVGLVKGF, GTGLGAEIIGTFVLVYTVFSA, and IPVLAPLPIGFAVFMVHLATI. The short motif at 232-234 is the NPA 2 element; sequence NPA. A helical membrane pass occupies residues 254–274; that stretch reads IFWVGPLIGAAIAAAYHQYVL.

It belongs to the MIP/aquaporin (TC 1.A.8) family. PIP (TC 1.A.8.11) subfamily. Expressed in roots, leaves and anthers.

Its subcellular location is the cell membrane. Its function is as follows. Aquaporins facilitate the transport of water and small neutral solutes across cell membranes. The sequence is that of Probable aquaporin PIP2-2 (PIP2-2) from Oryza sativa subsp. japonica (Rice).